Consider the following 165-residue polypeptide: Ureidoglycolate lyase (165 aa).

Belongs to the ureidoglycolate lyase family. As to quaternary structure, homodimer. The cofactor is Ni(2+).

It carries out the reaction (S)-ureidoglycolate = urea + glyoxylate. It functions in the pathway nitrogen metabolism; (S)-allantoin degradation. Functionally, catalyzes the catabolism of the allantoin degradation intermediate (S)-ureidoglycolate, generating urea and glyoxylate. Involved in the utilization of allantoin as nitrogen source. This is Ureidoglycolate lyase from Chelativorans sp. (strain BNC1).